Reading from the N-terminus, the 91-residue chain is Aspartyl/glutamyl-tRNA(Asn/Gln) amidotransferase subunit C (91 aa).

Residues 68–91 (LDQDDALANAPETEDGRFKGPNVS) are disordered.

This sequence belongs to the GatC family. As to quaternary structure, heterotrimer of A, B and C subunits.

It catalyses the reaction L-glutamyl-tRNA(Gln) + L-glutamine + ATP + H2O = L-glutaminyl-tRNA(Gln) + L-glutamate + ADP + phosphate + H(+). The enzyme catalyses L-aspartyl-tRNA(Asn) + L-glutamine + ATP + H2O = L-asparaginyl-tRNA(Asn) + L-glutamate + ADP + phosphate + 2 H(+). Its function is as follows. Allows the formation of correctly charged Asn-tRNA(Asn) or Gln-tRNA(Gln) through the transamidation of misacylated Asp-tRNA(Asn) or Glu-tRNA(Gln) in organisms which lack either or both of asparaginyl-tRNA or glutaminyl-tRNA synthetases. The reaction takes place in the presence of glutamine and ATP through an activated phospho-Asp-tRNA(Asn) or phospho-Glu-tRNA(Gln). The polypeptide is Aspartyl/glutamyl-tRNA(Asn/Gln) amidotransferase subunit C (Halobacterium salinarum (strain ATCC 29341 / DSM 671 / R1)).